A 559-amino-acid chain; its full sequence is Urocanate hydratase (559 aa).

Residues 53 to 54 (GG), glutamine 131, 177 to 179 (GMG), glutamate 197, arginine 202, 243 to 244 (NA), 264 to 268 (QTSAH), 274 to 275 (YL), and tyrosine 323 contribute to the NAD(+) site. The active site involves cysteine 411. Glycine 493 contacts NAD(+).

It belongs to the urocanase family. The cofactor is NAD(+).

It localises to the cytoplasm. It carries out the reaction 4-imidazolone-5-propanoate = trans-urocanate + H2O. The protein operates within amino-acid degradation; L-histidine degradation into L-glutamate; N-formimidoyl-L-glutamate from L-histidine: step 2/3. Functionally, catalyzes the conversion of urocanate to 4-imidazolone-5-propionate. This chain is Urocanate hydratase, found in Pseudomonas aeruginosa (strain LESB58).